The following is a 147-amino-acid chain: Small ribosomal subunit protein bS6 (147 aa).

Over residues 97-141 the composition is skewed to basic and acidic residues; that stretch reads EEGPSAMMRKADRDRERDDRGGGFRGDREGGFRGDRGPRRPREEA. A disordered region spans residues 97 to 147; sequence EEGPSAMMRKADRDRERDDRGGGFRGDREGGFRGDRGPRRPREEAPAVVEE.

This sequence belongs to the bacterial ribosomal protein bS6 family.

In terms of biological role, binds together with bS18 to 16S ribosomal RNA. The polypeptide is Small ribosomal subunit protein bS6 (Nitrobacter hamburgensis (strain DSM 10229 / NCIMB 13809 / X14)).